Consider the following 151-residue polypeptide: Cytochrome c-type biogenesis protein CcmE 2 (151 aa).

Over 1–8 (MNPLRKKR) the chain is Cytoplasmic. A helical; Signal-anchor for type II membrane protein transmembrane segment spans residues 9-29 (LVIILAILVGVGAAVGLALSA). The Periplasmic portion of the chain corresponds to 30 to 151 (LQQNINLFYT…QSAPAPGKEG (122 aa)). Residues His-124 and Tyr-128 each coordinate heme.

It belongs to the CcmE/CycJ family.

Its subcellular location is the cell inner membrane. In terms of biological role, heme chaperone required for the biogenesis of c-type cytochromes. Transiently binds heme delivered by CcmC and transfers the heme to apo-cytochromes in a process facilitated by CcmF and CcmH. The protein is Cytochrome c-type biogenesis protein CcmE 2 of Pseudomonas fluorescens (strain Pf0-1).